Here is a 241-residue protein sequence, read N- to C-terminus: dTTP/UTP pyrophosphatase (241 aa).

Serine 38 carries the phosphoserine modification. The active-site Proton acceptor is the aspartate 105.

Belongs to the Maf family. YhdE subfamily. Requires a divalent metal cation as cofactor.

The protein resides in the cytoplasm. The protein localises to the nucleus. The catalysed reaction is dTTP + H2O = dTMP + diphosphate + H(+). The enzyme catalyses UTP + H2O = UMP + diphosphate + H(+). Nucleoside triphosphate pyrophosphatase that hydrolyzes dTTP and UTP. May have a dual role in cell division arrest and in preventing the incorporation of modified nucleotides into cellular nucleic acids. The protein is dTTP/UTP pyrophosphatase of Schizosaccharomyces pombe (strain 972 / ATCC 24843) (Fission yeast).